A 1093-amino-acid chain; its full sequence is TATA element modulatory factor (1093 aa).

Disordered stretches follow at residues 38–80 (WAET…SPKA) and 108–189 (TIQK…DMKV). Residues 51 to 70 (SPVSGGWDTSTWGLKSNTEP) show a composition bias toward polar residues. 4 positions are modified to phosphoserine: serine 72, serine 77, serine 112, and serine 136. Residues 123 to 137 (QRPEEEVKSSLHESL) are compositionally biased toward basic and acidic residues. Positions 139-158 (IGQSRTPETTESQVKDSSLC) are enriched in polar residues. Over residues 173 to 187 (TEGKHEETVNKESDM) the composition is skewed to basic and acidic residues. Serine 199 and serine 217 each carry phosphoserine. Basic and acidic residues predominate over residues 229 to 238 (PKEQKHEDRQ). 2 disordered regions span residues 229–260 (PKEQ…SDIE) and 266–285 (SVIS…SKSS). Positions 246 to 257 (VSTFSSGTSTTS) are enriched in low complexity. Phosphoserine occurs at positions 328, 330, 333, 338, 344, 413, 542, 925, and 928. The tract at residues 333–342 (SLDSRSVSEI) is interaction with Elongin BC complex. Residues 439–922 (EALSEKEDVC…QETIKEKERK (484 aa)) adopt a coiled-coil conformation. The segment at 919-939 (KERKPFSVSSTPTMSRSSSIS) is disordered. Over residues 925 to 939 (SVSSTPTMSRSSSIS) the composition is skewed to low complexity. Position 929 is a phosphothreonine (threonine 929). A Phosphoserine modification is found at serine 933. Residues 984–1092 (SIIENLQSQL…QIDELLRQSL (109 aa)) adopt a coiled-coil conformation.

Interacts with TRNP1; may regulate TRNP1 proteasomal degradation. Component of the SNF/SWI transcription factor complexes. Interacts with RAB6A. Interacts with STAT3 and FER. Interacts with TCEB1. In terms of processing, phosphorylated by FER.

The protein resides in the cytoplasm. The protein localises to the nucleus. It localises to the golgi apparatus membrane. Potential coactivator of the androgen receptor. Mediates STAT3 degradation. May play critical roles in two RAB6-dependent retrograde transport processes: one from endosomes to the Golgi and the other from the Golgi to the ER. This protein binds the HIV-1 TATA element and inhibits transcriptional activation by the TATA-binding protein (TBP). This is TATA element modulatory factor (TMF1) from Homo sapiens (Human).